Consider the following 380-residue polypeptide: GATOR1 complex protein NPRL2 (380 aa).

Residues 1–133 are interaction with PDPK1; sequence MGSSCRIECI…SKQKLVPIMT (133 aa). Residue Arg78 participates in GDP binding. Arg78 bears the Asymmetric dimethylarginine mark. Glycyl lysine isopeptide (Lys-Gly) (interchain with G-Cter in ubiquitin) cross-links involve residues Lys158 and Lys357.

The protein belongs to the NPR2 family. As to quaternary structure, within the GATOR complex, component of the GATOR1 subcomplex, made of DEPDC5, NPRL2 and NPRL3. GATOR1 mediates the strong interaction of the GATOR complex with small GTPases Rag (RagA/RRAGA, RagB/RRAGB, RagC/RRAGC and/or RagD/RRAGD) heterodimers. GATOR1 interacts with GPR155/LYCHOS; interaction takes place in presence of cholesterol and prevents interaction between GATOR1 and KICSTOR. Interacts with PDPK1. In the presence of abundant amino acids, ubiquitinated at Lys-158 and Lys-357 via 'Lys-6'-linked ubiquitination by the WDR24 component of the GATOR2 complex, thereby inhibiting the GATOR1 complex and promoting mTORC1 activation. In terms of processing, asymmetric dimethylation at Arg-78 by PRMT1 inhibits the GTPase activator activity of the GATOR1 complex and consequently inducing timely mTORC1 activation under methionine-sufficient conditions.

The protein localises to the lysosome membrane. In terms of biological role, catalytic component of the GATOR1 complex, a multiprotein complex that functions as an inhibitor of the amino acid-sensing branch of the mTORC1 pathway. In response to amino acid depletion, the GATOR1 complex has GTPase activating protein (GAP) activity and strongly increases GTP hydrolysis by RagA/RRAGA (or RagB/RRAGB) within heterodimeric Rag complexes, thereby turning them into their inactive GDP-bound form, releasing mTORC1 from lysosomal surface and inhibiting mTORC1 signaling. In the presence of abundant amino acids, the GATOR1 complex is ubiquitinated and inhibited by GATOR2. Within the GATOR1 complex, NPRL2 constitutes the catalytic subunit that mediates the GTPase activator activity and under methionine-sufficient conditions, the GTPase activator activity is inhibited by PRMT1 through methylation and consequently inducing timely mTORC1 activation. Suppresses Src-dependent tyrosine phosphorylation and activation of PDPK1 and its downstream signaling. Down-regulates PDPK1 kinase activity by interfering with tyrosine phosphorylation at 'Tyr-9', 'Tyr-373' and 'Tyr-376' residues. May act as a tumor suppressor. Suppresses cell growth and enhances sensitivity to various anticancer drugs. The chain is GATOR1 complex protein NPRL2 from Mus musculus (Mouse).